The chain runs to 358 residues: MREQLMAAETVTGIEWHDGALHLLDQRLLPLEQCWLTCTDVAQVAEAISEMVVRGAPAIGISAAYGLVLALRQRLAEGEGWEESLEEDFLMLGEARPTPANLFWALNRMRERLQRLRPGDDVLAVMEAEAIAIHESDREANLTMAQFGVEQIRKHQGSEQALLTHGNAGALATGGFGTALGVIRAATLEGMVEQVYVCESRPWLQGSRLTAWELAADGVPVTVVADAAAGHLMKTKGISWVVVGADCIAANGDVAAKIGTYQIAVAAMHHGLRFMVVAPSSSIDLNLATGEDIPLETRGVEELLEVAGIQVTADVEVYNPVVDVTPADLIDVIVTEKGVVERPDAAKIAQLMCRKRLH.

Substrate is bound by residues 54-56, Arg96, and Gln205; that span reads RGA. Asp246 (proton donor) is an active-site residue. 256–257 lines the substrate pocket; that stretch reads AK.

It belongs to the eIF-2B alpha/beta/delta subunits family. MtnA subfamily.

It carries out the reaction 5-(methylsulfanyl)-alpha-D-ribose 1-phosphate = 5-(methylsulfanyl)-D-ribulose 1-phosphate. The protein operates within amino-acid biosynthesis; L-methionine biosynthesis via salvage pathway; L-methionine from S-methyl-5-thio-alpha-D-ribose 1-phosphate: step 1/6. In terms of biological role, catalyzes the interconversion of methylthioribose-1-phosphate (MTR-1-P) into methylthioribulose-1-phosphate (MTRu-1-P). The protein is Methylthioribose-1-phosphate isomerase of Pseudomonas entomophila (strain L48).